Consider the following 365-residue polypeptide: Deoxyguanosinetriphosphate triphosphohydrolase-like protein (365 aa).

The 136-residue stretch at 52–187 folds into the HD domain; it reads RLTHSIEVSQ…VDHADEIAYV (136 aa).

It belongs to the dGTPase family. Type 2 subfamily.

This is Deoxyguanosinetriphosphate triphosphohydrolase-like protein from Wolinella succinogenes (strain ATCC 29543 / DSM 1740 / CCUG 13145 / JCM 31913 / LMG 7466 / NCTC 11488 / FDC 602W) (Vibrio succinogenes).